The following is a 312-amino-acid chain: Olfactory receptor 2H2 (312 aa).

Residues 1 to 23 (MVNQSSTPGFLLLGFSEHPGLER) lie on the Extracellular side of the membrane. A glycan (N-linked (GlcNAc...) asparagine) is linked at Asn-3. Residues 24 to 47 (TLFVVVLTSYLLTLVGNTLIILLS) form a helical membrane-spanning segment. At 48–55 (ALDPKLHS) the chain is on the cytoplasmic side. A helical transmembrane segment spans residues 56–77 (PMYFFLSNLSFLDLCFTTSCVP). Residues 78–98 (QMLVNLWGPKKTISFLDCSVQ) are Extracellular-facing. Cysteines 95 and 187 form a disulfide. A helical membrane pass occupies residues 99-118 (IFIFLSLGTTECILLTVMAF). The Cytoplasmic portion of the chain corresponds to 119-137 (DRYVAVCQPLHYATIIHPR). The helical transmembrane segment at 138-156 (LCWQLASVAWVIGLVESVV) threads the bilayer. The Extracellular segment spans residues 157 to 193 (QTPSTLHLPFCPDRQVDDFVCEVPALIRLSCEDTSYN). Residues 194–217 (EIQVAVASVFILVVPLSLILVSYG) traverse the membrane as a helical segment. Residues 218–234 (AITWAVLRINSAKGRRK) are Cytoplasmic-facing. The helical transmembrane segment at 235–257 (AFGTCSSHLTVVTLFYSSVIAVY) threads the bilayer. Over 258–270 (LQPKNPYAQERGK) the chain is Extracellular. Residues 271-290 (FFGLFYAVGTPSLNPLIYTL) traverse the membrane as a helical segment. Residues 291–312 (RNKEVTRAFRRLLGKEMGLTQS) are Cytoplasmic-facing.

It belongs to the G-protein coupled receptor 1 family.

Its subcellular location is the cell membrane. Functionally, odorant receptor. The polypeptide is Olfactory receptor 2H2 (OR2H2) (Homo sapiens (Human)).